The following is a 382-amino-acid chain: MLRWTVHLEGGPRRVNHAAVAVGHRVYSFGGYCSGEDYETLRQIDVHIFNAVSLRWTKLPPVKSAIRGQAPVVPYMRYGHSTVLIDDTVLLWGGRNDTEGACNVLYAFDVNTHKWFTPRVSGTVPGARDGHSACVLGKIMYIFGGYEQQADCFSNDIHKLDTSTMTWTLICTKGSPARWRDFHSATMLGSHMYVFGGRADRFGPFHSNNEIYCNRIRVFDTRTEAWLDCPPTPVLPEGRRSHSAFGYNGELYIFGGYNARLNRHFHDLWKFNPVSFTWKKIEPKGKGPCPRRRQCCCIVGDKIVLFGGTSPSPEEGLGDEFDLIDHSDLHILDFSPSLKTLCKLAVIQYNLDQSCLPHDIRWELNAMTTNSNISRPIVSSHG.

Kelch repeat units follow at residues 25–77 (RVYS…PYMR), 88–138 (TVLL…VLGK), 139–189 (IMYI…TMLG), 191–249 (HMYV…GYNG), and 251–301 (LYIF…IVGD).

In terms of assembly, component of a CRL2(KLHDC3) complex, also named ECS(KLHDC3) complex, composed of CUL2, Elongin BC (ELOB and ELOC), RBX1 and substrate-specific adapter KLHDC3. May form oligomers as a KLHDC3-ELOB-ELOC complex; this interaction is likely autoinhibitory for the E3 ligase complex.

The protein localises to the cytoplasm. It participates in protein modification; protein ubiquitination. Functionally, substrate-recognition component of a Cul2-RING (CRL2) E3 ubiquitin-protein ligase complex of the DesCEND (destruction via C-end degrons) pathway, which recognizes a C-degron located at the extreme C terminus of target proteins, leading to their ubiquitination and degradation. The C-degron recognized by the DesCEND pathway is usually a motif of less than ten residues and can be present in full-length proteins, truncated proteins or proteolytically cleaved forms. The CRL2(KLHDC3) complex specifically recognizes proteins with a glycine (Gly) at the C-terminus, leading to their ubiquitination and degradation: recognizes the C-terminal -Arg-(Xaa)n-Arg-Gly, -Arg-(Xaa)n-Lys-Gly, and -Arg-(Xaa)n-Gln-Gly degrons. The CRL2(KLHDC3) complex mediates ubiquitination and degradation of truncated SELENOV and SEPHS2 selenoproteins produced by failed UGA/Sec decoding, which end with a glycine. May be involved in meiotic recombination process. This chain is Kelch domain-containing protein 3, found in Homo sapiens (Human).